Consider the following 103-residue polypeptide: Large ribosomal subunit protein uL24 (103 aa).

It belongs to the universal ribosomal protein uL24 family. Part of the 50S ribosomal subunit.

In terms of biological role, one of two assembly initiator proteins, it binds directly to the 5'-end of the 23S rRNA, where it nucleates assembly of the 50S subunit. Functionally, one of the proteins that surrounds the polypeptide exit tunnel on the outside of the subunit. In Treponema pallidum (strain Nichols), this protein is Large ribosomal subunit protein uL24.